The primary structure comprises 430 residues: sn-glycerol-3-phosphate-binding periplasmic protein UgpB (430 aa).

Residues 1 to 20 (MRLISISTTIAFGFAFQAQA) form the signal peptide. Positions 62, 86, 141, 268, 302, 341, and 392 each coordinate sn-glycerol 3-phosphate.

The protein belongs to the bacterial solute-binding protein 1 family. As to quaternary structure, the complex is composed of two ATP-binding proteins (UgpC), two transmembrane proteins (UgpA and UgpE) and a solute-binding protein (UgpB).

It is found in the periplasm. Part of the ABC transporter complex UgpBAEC involved in sn-glycerol-3-phosphate (G3P) import. Binds G3P. This Rhizobium meliloti (strain 1021) (Ensifer meliloti) protein is sn-glycerol-3-phosphate-binding periplasmic protein UgpB (ugpB).